Consider the following 400-residue polypeptide: tRNA(Met) cytidine acetate ligase (400 aa).

Residues 7-20, Gly102, Asn165, and Arg190 contribute to the ATP site; that span reads ITEY…HIYH.

The protein belongs to the TmcAL family.

It is found in the cytoplasm. The enzyme catalyses cytidine(34) in elongator tRNA(Met) + acetate + ATP = N(4)-acetylcytidine(34) in elongator tRNA(Met) + AMP + diphosphate. In terms of biological role, catalyzes the formation of N(4)-acetylcytidine (ac(4)C) at the wobble position of elongator tRNA(Met), using acetate and ATP as substrates. First activates an acetate ion to form acetyladenylate (Ac-AMP) and then transfers the acetyl group to tRNA to form ac(4)C34. This is tRNA(Met) cytidine acetate ligase from Clostridium novyi (strain NT).